The sequence spans 656 residues: Ankyrin repeat and SAM domain-containing protein 3 (656 aa).

The tract at residues 1 to 422 (MSELSDEASE…AESSPQTQRA (422 aa)) is interaction with NEK7. Phosphoserine occurs at positions 2 and 5. ANK repeat units lie at residues 34-64 (DVPL…DLNK), 68-97 (GGWT…SVNV), 101-130 (EGQT…ELEM), 134-163 (QGWT…NANV), 168-197 (CGFT…KVDA), and 201-220 (SGAT…IVAL). N96 carries the post-translational modification 3-hydroxyasparagine. A phosphoserine mark is found at S201, S225, S243, S244, and S245. 2 disordered regions span residues 235–265 (SPEK…GVSI) and 277–312 (GIGL…EEEG). T319 carries the phosphothreonine modification. Phosphoserine is present on residues S320, S368, S371, and S375. A disordered region spans residues 346–425 (GPVQSSSSSE…SPQTQRAPYS (80 aa)). Positions 425–488 (SGPQDLAALL…TSAIARWHSS (64 aa)) constitute an SAM domain. A coiled-coil region spans residues 501 to 526 (ADRLEAEMQELAIQLHKRCEEVEATR). Residue S541 is modified to Phosphoserine.

Homooligomer. Interacts (via SAM domain) with ANKS6 (via SAM domain). Interacts with BICC1. Interacts with NPHP1. Interacts with NEK8. Interacts with HIF1AN. Interacts with NEK7; this interaction alters the subcellular distribution of NEK7 by preventing its nuclear translocation. Hydroxylated at Asn-96, most probably by HIF1AN. Post-translationally, phosphorylations at Ser-5, Ser-225, Thr-319, Ser-320, Ser-368 and Ser-371 occur in a NEK7-dependent manner. In terms of processing, polyubiquitinated.

The protein localises to the cell projection. Its subcellular location is the cilium. It localises to the cytoplasm. In terms of biological role, may be involved in vasopressin signaling in the kidney. This chain is Ankyrin repeat and SAM domain-containing protein 3 (ANKS3), found in Homo sapiens (Human).